A 418-amino-acid chain; its full sequence is Magnesium transporter MRS2-E (418 aa).

The disordered stretch occupies residues 119-146 (DAAPSTNPAAADRGNGTEQGDQGSVPGL). Positions 166-232 (VCLEHACKDL…RDELEHLLDD (67 aa)) form a coiled coil. Residues 258-268 (DSHKYASVDHD) show a composition bias toward basic and acidic residues. Residues 258 to 287 (DSHKYASVDHDDDREEEDHDDETESGRESS) form a disordered region. Over residues 269-280 (DDREEEDHDDET) the composition is skewed to acidic residues. The chain crosses the membrane as a helical span at residues 344-364 (GVMLTTATVVVTAGIVVVSLF). The Required for magnesium transport activity motif lies at 365–367 (GMN). The chain crosses the membrane as a helical span at residues 389–409 (FWETTFGTVAGCIAIYLLAIY).

This sequence belongs to the CorA metal ion transporter (MIT) (TC 1.A.35.5) family.

It is found in the membrane. In terms of biological role, magnesium transporter that may mediate the influx of magnesium. The protein is Magnesium transporter MRS2-E (MRS2-E) of Oryza sativa subsp. indica (Rice).